Reading from the N-terminus, the 603-residue chain is Linalool synthase Tps-5031L19, chloroplastic (603 aa).

The N-terminal 36 residues, 1-36, are a transit peptide targeting the chloroplast; it reads MSSMRTYVAIMKKPSVEHVDNVDKKASKPSWRVSLS. Residues Arg-322, Asp-359, Asp-363, Arg-500, and Asp-503 each coordinate (2E)-geranyl diphosphate. The Mg(2+) site is built by Asp-359 and Asp-363. Positions 359 to 363 match the DDXXD motif motif; sequence DDVYD. Residues Asp-503, Thr-507, and Glu-511 each contribute to the Mg(2+) site.

It belongs to the terpene synthase family. Tpsb subfamily. In terms of assembly, monomer. Requires Mg(2+) as cofactor. The cofactor is Mn(2+).

It localises to the plastid. The protein resides in the chloroplast. The catalysed reaction is (2E)-geranyl diphosphate + H2O = linalool + diphosphate. It functions in the pathway secondary metabolite biosynthesis; terpenoid biosynthesis. Its function is as follows. Monoterpene synthase (mono-TPS) involved in the biosynthesis of monoterpenes natural products. Catalyzes the conversion of (2E)-geranyl diphosphate (GPP) into linalool. The polypeptide is Linalool synthase Tps-5031L19, chloroplastic (Perilla frutescens var. hirtella (Perilla citriodora)).